Reading from the N-terminus, the 283-residue chain is 4-diphosphocytidyl-2-C-methyl-D-erythritol kinase (283 aa).

The active site involves Lys-10. 99–109 (PMGGGLGGGSS) contributes to the ATP binding site. Asp-141 is an active-site residue.

The protein belongs to the GHMP kinase family. IspE subfamily. Homodimer.

It carries out the reaction 4-CDP-2-C-methyl-D-erythritol + ATP = 4-CDP-2-C-methyl-D-erythritol 2-phosphate + ADP + H(+). The protein operates within isoprenoid biosynthesis; isopentenyl diphosphate biosynthesis via DXP pathway; isopentenyl diphosphate from 1-deoxy-D-xylulose 5-phosphate: step 3/6. In terms of biological role, catalyzes the phosphorylation of the position 2 hydroxy group of 4-diphosphocytidyl-2C-methyl-D-erythritol. This Escherichia coli O127:H6 (strain E2348/69 / EPEC) protein is 4-diphosphocytidyl-2-C-methyl-D-erythritol kinase.